The following is a 461-amino-acid chain: Probable metabolite transport protein CsbC (461 aa).

At 1–14 (MKKDTRKYMIYFFG) the chain is on the cytoplasmic side. A helical transmembrane segment spans residues 15–35 (ALGGLLYGYDTGVISGALLFI). Over 36 to 38 (NND) the chain is Extracellular. The chain crosses the membrane as a helical span at residues 39–59 (IPLTTLTEGLVVSMLLLGAIF). Topologically, residues 60–76 (GSALSGTCSDRWGRRKV) are cytoplasmic. A helical transmembrane segment spans residues 77-97 (VFVLSIIFIIGALACAFSQTI). Topologically, residues 98–104 (GMLIASR) are extracellular. A helical transmembrane segment spans residues 105–125 (VILGLAVGGSTALVPVYLSEM). The Cytoplasmic segment spans residues 126 to 139 (APTKIRGTLGTMNN). Residues 140 to 160 (LMIVTGILLAYIVNYLFTPFE) traverse the membrane as a helical segment. The Extracellular segment spans residues 161 to 163 (AWR). A helical membrane pass occupies residues 164-184 (WMVGLAAVPAVLLLIGIAFMP). The Cytoplasmic segment spans residues 185-241 (ESPRWLVKRGSEEEARRIMNITHDPKDIEMELAEMKQGEAEKKETTLGVLKAKWIRP). A helical membrane pass occupies residues 242–262 (MLLIGVGLAIFQQAVGINTVI). Residues 263–280 (YYAPTIFTKAGLGTSASA) are Extracellular-facing. Residues 281 to 301 (LGTMGIGILNVIMCITAMILI) form a helical membrane-spanning segment. Topologically, residues 302–308 (DRVGRKK) are cytoplasmic. A helical membrane pass occupies residues 309–329 (LLIWGSVGITLSLAALSGVLL). Residues 330–341 (TLGLSASTAWMT) lie on the Extracellular side of the membrane. A helical membrane pass occupies residues 342 to 362 (VVFLGVYIVFYQATWGPVVWV). Over 363–378 (LMPELFPSKARGAATG) the chain is Cytoplasmic. A helical membrane pass occupies residues 379–399 (FTTLVLSAANLIVSLVFPLML). Topologically, residues 400-402 (SAM) are extracellular. Residues 403–423 (GIAWVFMVFSVICLLSFFFAF) form a helical membrane-spanning segment. Residues 424–461 (YMVPETKGKSLEEIEASLKKRFKKKKSTQNQVLNERTL) lie on the Cytoplasmic side of the membrane.

It belongs to the major facilitator superfamily. Sugar transporter (TC 2.A.1.1) family.

The protein localises to the cell membrane. Its function is as follows. Could serve either a nutritional or an osmotic protection function. The sequence is that of Probable metabolite transport protein CsbC (csbC) from Bacillus subtilis (strain 168).